The following is a 376-amino-acid chain: Alkanesulfonate monooxygenase (376 aa).

The protein belongs to the SsuD family.

The catalysed reaction is an alkanesulfonate + FMNH2 + O2 = an aldehyde + FMN + sulfite + H2O + 2 H(+). Its function is as follows. Catalyzes the desulfonation of aliphatic sulfonates. The chain is Alkanesulfonate monooxygenase from Bacillus licheniformis (strain ATCC 14580 / DSM 13 / JCM 2505 / CCUG 7422 / NBRC 12200 / NCIMB 9375 / NCTC 10341 / NRRL NRS-1264 / Gibson 46).